The sequence spans 272 residues: Shikimate dehydrogenase (NADP(+)) (272 aa).

Shikimate is bound by residues 14 to 16 (SRS) and T61. Catalysis depends on K65, which acts as the Proton acceptor. E77 provides a ligand contact to NADP(+). Residues N86 and D102 each coordinate shikimate. NADP(+)-binding positions include 126–130 (GVGGA), 149–154 (NRTFPR), and M213. Y215 serves as a coordination point for shikimate. Residue G237 participates in NADP(+) binding.

The protein belongs to the shikimate dehydrogenase family. In terms of assembly, homodimer.

It catalyses the reaction shikimate + NADP(+) = 3-dehydroshikimate + NADPH + H(+). It participates in metabolic intermediate biosynthesis; chorismate biosynthesis; chorismate from D-erythrose 4-phosphate and phosphoenolpyruvate: step 4/7. Its function is as follows. Involved in the biosynthesis of the chorismate, which leads to the biosynthesis of aromatic amino acids. Catalyzes the reversible NADPH linked reduction of 3-dehydroshikimate (DHSA) to yield shikimate (SA). The polypeptide is Shikimate dehydrogenase (NADP(+)) (Sodalis glossinidius (strain morsitans)).